Here is a 181-residue protein sequence, read N- to C-terminus: Adenine phosphoribosyltransferase (181 aa).

The protein belongs to the purine/pyrimidine phosphoribosyltransferase family. Homodimer.

The protein resides in the cytoplasm. The catalysed reaction is AMP + diphosphate = 5-phospho-alpha-D-ribose 1-diphosphate + adenine. It participates in purine metabolism; AMP biosynthesis via salvage pathway; AMP from adenine: step 1/1. Catalyzes a salvage reaction resulting in the formation of AMP, that is energically less costly than de novo synthesis. The chain is Adenine phosphoribosyltransferase from Aeromonas salmonicida (strain A449).